Reading from the N-terminus, the 467-residue chain is ATP-dependent protease ATPase subunit HslU (467 aa).

Residues V22 and 64–69 (GVGKTE) each bind ATP. The tract at residues 149–192 (QTNNPLESLFGGAIPNFGQNNEDEEEPPTEEIKTKRSEIKRQLE) is disordered. The segment covering 178–192 (EEIKTKRSEIKRQLE) has biased composition (basic and acidic residues). ATP contacts are provided by D280, E345, and R417.

Belongs to the ClpX chaperone family. HslU subfamily. In terms of assembly, a double ring-shaped homohexamer of HslV is capped on each side by a ring-shaped HslU homohexamer. The assembly of the HslU/HslV complex is dependent on binding of ATP.

The protein localises to the cytoplasm. Functionally, ATPase subunit of a proteasome-like degradation complex; this subunit has chaperone activity. The binding of ATP and its subsequent hydrolysis by HslU are essential for unfolding of protein substrates subsequently hydrolyzed by HslV. HslU recognizes the N-terminal part of its protein substrates and unfolds these before they are guided to HslV for hydrolysis. This is ATP-dependent protease ATPase subunit HslU from Staphylococcus aureus (strain MRSA252).